The chain runs to 355 residues: Sulfate/thiosulfate import ATP-binding protein CysA (355 aa).

An ABC transporter domain is found at 3-233 (IIINNVSKQF…PASPFVMGFI (231 aa)). 35–42 (GPSGSGKS) provides a ligand contact to ATP.

Belongs to the ABC transporter superfamily. Sulfate/tungstate importer (TC 3.A.1.6) family. In terms of assembly, the complex is composed of two ATP-binding proteins (CysA), two transmembrane proteins (CysT and CysW) and a solute-binding protein (CysP).

It is found in the cell inner membrane. The catalysed reaction is sulfate(out) + ATP + H2O = sulfate(in) + ADP + phosphate + H(+). It carries out the reaction thiosulfate(out) + ATP + H2O = thiosulfate(in) + ADP + phosphate + H(+). Functionally, part of the ABC transporter complex CysAWTP involved in sulfate/thiosulfate import. Responsible for energy coupling to the transport system. The chain is Sulfate/thiosulfate import ATP-binding protein CysA from Synechocystis sp. (strain ATCC 27184 / PCC 6803 / Kazusa).